A 415-amino-acid polypeptide reads, in one-letter code: Tyrosine--tRNA ligase (415 aa).

The 'HIGH' region signature appears at 54–63 (PTGTDIHIGH). The 'KMSKS' region signature appears at 248-252 (KMSKS). An ATP-binding site is contributed by K251. The S4 RNA-binding domain occupies 351-415 (AKAFYLFSKM…GKKKFLRVST (65 aa)).

The protein belongs to the class-I aminoacyl-tRNA synthetase family. TyrS type 2 subfamily. In terms of assembly, homodimer.

Its subcellular location is the cytoplasm. It carries out the reaction tRNA(Tyr) + L-tyrosine + ATP = L-tyrosyl-tRNA(Tyr) + AMP + diphosphate + H(+). Catalyzes the attachment of tyrosine to tRNA(Tyr) in a two-step reaction: tyrosine is first activated by ATP to form Tyr-AMP and then transferred to the acceptor end of tRNA(Tyr). The chain is Tyrosine--tRNA ligase from Prochlorococcus marinus (strain NATL2A).